Here is a 301-residue protein sequence, read N- to C-terminus: Homoserine O-acetyltransferase (301 aa).

Cys-142 functions as the Acyl-thioester intermediate in the catalytic mechanism. Lys-163 and Ser-192 together coordinate substrate. His-235 functions as the Proton acceptor in the catalytic mechanism. Glu-237 is an active-site residue. A substrate-binding site is contributed by Arg-249.

This sequence belongs to the MetA family.

The protein localises to the cytoplasm. It carries out the reaction L-homoserine + acetyl-CoA = O-acetyl-L-homoserine + CoA. Its pathway is amino-acid biosynthesis; L-methionine biosynthesis via de novo pathway; O-acetyl-L-homoserine from L-homoserine: step 1/1. Its function is as follows. Transfers an acetyl group from acetyl-CoA to L-homoserine, forming acetyl-L-homoserine. The protein is Homoserine O-acetyltransferase of Bacillus cereus (strain ATCC 14579 / DSM 31 / CCUG 7414 / JCM 2152 / NBRC 15305 / NCIMB 9373 / NCTC 2599 / NRRL B-3711).